The chain runs to 393 residues: 4-hydroxyphenylpyruvate dioxygenase (393 aa).

At threonine 2 the chain carries N-acetylthreonine. 2 VOC domains span residues 18-149 (HFHS…LVEK) and 180-338 (IIDH…IFTK). Position 132 is an N6-succinyllysine (lysine 132). Histidine 183 is a binding site for Fe cation. Residues serine 211, serine 226, and serine 250 each carry the phosphoserine modification. Residues histidine 266 and glutamate 349 each coordinate Fe cation.

The protein belongs to the 4HPPD family. As to quaternary structure, homodimer. Requires Fe cation as cofactor.

The protein localises to the cytoplasm. The protein resides in the endoplasmic reticulum membrane. It localises to the golgi apparatus membrane. It carries out the reaction 3-(4-hydroxyphenyl)pyruvate + O2 = homogentisate + CO2. It functions in the pathway amino-acid degradation; L-phenylalanine degradation; acetoacetate and fumarate from L-phenylalanine: step 3/6. Catalyzes the conversion of 4-hydroxyphenylpyruvic acid to homogentisic acid, one of the steps in tyrosine catabolism. The sequence is that of 4-hydroxyphenylpyruvate dioxygenase (Hpd) from Mus musculus (Mouse).